The following is a 76-amino-acid chain: ATP synthase subunit 9, mitochondrial (76 aa).

The residue at position 1 (Met1) is an N-formylmethionine. The next 2 membrane-spanning stretches (helical) occupy residues 14–34 (ISTIGLLGAGIGIAIVFAALI) and 52–72 (ILGFALSEATGLFCLMVSFLL).

This sequence belongs to the ATPase C chain family. As to quaternary structure, F-type ATPases have 2 components, CF(1) - the catalytic core - and CF(0) - the membrane proton channel. In yeast, the dimeric form of ATP synthase consists of 18 polypeptides: alpha, beta, gamma, delta, epsilon, 4 (B), 5 (OSCP), 6 (A), 8, 9 (C), d, E (Tim11), f, g, h, i, j and k.

The protein localises to the mitochondrion membrane. In terms of biological role, mitochondrial membrane ATP synthase (F(1)F(0) ATP synthase or Complex V) produces ATP from ADP in the presence of a proton gradient across the membrane which is generated by electron transport complexes of the respiratory chain. F-type ATPases consist of two structural domains, F(1) - containing the extramembraneous catalytic core and F(0) - containing the membrane proton channel, linked together by a central stalk and a peripheral stalk. During catalysis, ATP synthesis in the catalytic domain of F(1) is coupled via a rotary mechanism of the central stalk subunits to proton translocation. Part of the complex F(0) domain. A homomeric c-ring of probably 10 subunits is part of the complex rotary element. This chain is ATP synthase subunit 9, mitochondrial (ATP9), found in Saccharomyces paradoxus (Yeast).